Here is a 147-residue protein sequence, read N- to C-terminus: Hemoglobin subunit gamma (147 aa).

Residues 3 to 147 enclose the Globin domain; the sequence is NFTAEDKAAI…VASALASRYH (145 aa). The heme b site is built by H64 and H93.

This sequence belongs to the globin family. As to quaternary structure, heterotetramer of two alpha chains and two gamma chains in fetal hemoglobin (Hb F). Red blood cells.

In terms of biological role, gamma chains make up the fetal hemoglobin F, in combination with alpha chains. The protein is Hemoglobin subunit gamma (HBG) of Alouatta seniculus (Red howler monkey).